We begin with the raw amino-acid sequence, 179 residues long: Protein GrpE (179 aa).

The segment at 1 to 45 (MSEEKLTQDPTAEEEQTETADQQESADVNWEQEAAHWKAQAEEHQ) is disordered. A compositionally biased stretch (basic and acidic residues) spans 33 to 45 (EAAHWKAQAEEHQ).

It belongs to the GrpE family. Homodimer.

Its subcellular location is the cytoplasm. Participates actively in the response to hyperosmotic and heat shock by preventing the aggregation of stress-denatured proteins, in association with DnaK and GrpE. It is the nucleotide exchange factor for DnaK and may function as a thermosensor. Unfolded proteins bind initially to DnaJ; upon interaction with the DnaJ-bound protein, DnaK hydrolyzes its bound ATP, resulting in the formation of a stable complex. GrpE releases ADP from DnaK; ATP binding to DnaK triggers the release of the substrate protein, thus completing the reaction cycle. Several rounds of ATP-dependent interactions between DnaJ, DnaK and GrpE are required for fully efficient folding. The polypeptide is Protein GrpE (Brevibacillus choshinensis).